The sequence spans 184 residues: Endoribonuclease YbeY (184 aa).

The Zn(2+) site is built by histidine 118, histidine 122, and histidine 128. The disordered stretch occupies residues 156-184 (YHQDRQSQKDQRLLDKSRYFDELNHGDTP). Residues 157–184 (HQDRQSQKDQRLLDKSRYFDELNHGDTP) are compositionally biased toward basic and acidic residues.

The protein belongs to the endoribonuclease YbeY family. Zn(2+) serves as cofactor.

It localises to the cytoplasm. In terms of biological role, single strand-specific metallo-endoribonuclease involved in late-stage 70S ribosome quality control and in maturation of the 3' terminus of the 16S rRNA. The polypeptide is Endoribonuclease YbeY (Mycolicibacterium vanbaalenii (strain DSM 7251 / JCM 13017 / BCRC 16820 / KCTC 9966 / NRRL B-24157 / PYR-1) (Mycobacterium vanbaalenii)).